The sequence spans 469 residues: Argininosuccinate lyase (469 aa).

It belongs to the lyase 1 family. Argininosuccinate lyase subfamily.

It localises to the cytoplasm. The catalysed reaction is 2-(N(omega)-L-arginino)succinate = fumarate + L-arginine. Its pathway is amino-acid biosynthesis; L-arginine biosynthesis; L-arginine from L-ornithine and carbamoyl phosphate: step 3/3. This Burkholderia mallei (strain NCTC 10247) protein is Argininosuccinate lyase.